The primary structure comprises 151 residues: Acidic phospholipase A2 2 (151 aa).

Positions 1-27 are cleaved as a signal peptide; sequence MYPAHLLVLLAVCVSLLGAASIPARPL. Intrachain disulfides connect Cys-38-Cys-104, Cys-54-Cys-151, Cys-56-Cys-72, Cys-71-Cys-132, Cys-78-Cys-125, Cys-88-Cys-118, and Cys-111-Cys-123. Tyr-55, Gly-57, and Gly-59 together coordinate Ca(2+). Residue His-75 is part of the active site. Residue Asp-76 participates in Ca(2+) binding. Residue Asp-126 is part of the active site.

This sequence belongs to the phospholipase A2 family. Group I subfamily. D49 sub-subfamily. Ca(2+) is required as a cofactor. As to expression, expressed by the venom gland.

It is found in the secreted. The enzyme catalyses a 1,2-diacyl-sn-glycero-3-phosphocholine + H2O = a 1-acyl-sn-glycero-3-phosphocholine + a fatty acid + H(+). PLA2 catalyzes the calcium-dependent hydrolysis of the 2-acyl groups in 3-sn-phosphoglycerides. This is Acidic phospholipase A2 2 from Tropidechis carinatus (Australian rough-scaled snake).